A 673-amino-acid polypeptide reads, in one-letter code: Poly(glycerol-phosphate) alpha-glucosyltransferase (673 aa).

Phosphoserine is present on Ser-2.

The protein belongs to the glycosyltransferase group 1 family. Glycosyltransferase 4 subfamily.

Its subcellular location is the cytoplasm. The catalysed reaction is 4-O-{[(2R)-1-glycerylphospho](n)-(2R)-1-glycerylphospho}-N-acetyl-beta-D-mannosaminyl-(1-&gt;4)-N-acetyl-alpha-D-glucosaminyl undecaprenyl diphosphate + n UDP-alpha-D-glucose = 4-O-{[(2R)-2-alpha-D-glucosyl-1-glycerylphospho](n)-(2R)-1-glycerylphospho}-N-acetyl-beta-D-mannosaminyl-(1-&gt;4)-N-acetyl-alpha-D-glucosaminyl undecaprenyl diphosphate + n UDP + n H(+). It participates in cell wall biogenesis; poly(glycerol phosphate) teichoic acid biosynthesis. Functionally, catalyzes the addition of glucose to the C-2 hydroxy group of the glycerol units in teichoic acid. The protein is Poly(glycerol-phosphate) alpha-glucosyltransferase (tagE) of Bacillus subtilis (strain 168).